Consider the following 363-residue polypeptide: UDP-N-acetylglucosamine--N-acetylmuramyl-(pentapeptide) pyrophosphoryl-undecaprenol N-acetylglucosamine transferase (363 aa).

UDP-N-acetyl-alpha-D-glucosamine-binding positions include 10–12 (TGG), Asn-124, Ser-195, Ile-250, and Gln-295.

This sequence belongs to the glycosyltransferase 28 family. MurG subfamily.

The protein resides in the cell membrane. The enzyme catalyses di-trans,octa-cis-undecaprenyl diphospho-N-acetyl-alpha-D-muramoyl-L-alanyl-D-glutamyl-meso-2,6-diaminopimeloyl-D-alanyl-D-alanine + UDP-N-acetyl-alpha-D-glucosamine = di-trans,octa-cis-undecaprenyl diphospho-[N-acetyl-alpha-D-glucosaminyl-(1-&gt;4)]-N-acetyl-alpha-D-muramoyl-L-alanyl-D-glutamyl-meso-2,6-diaminopimeloyl-D-alanyl-D-alanine + UDP + H(+). It functions in the pathway cell wall biogenesis; peptidoglycan biosynthesis. Functionally, cell wall formation. Catalyzes the transfer of a GlcNAc subunit on undecaprenyl-pyrophosphoryl-MurNAc-pentapeptide (lipid intermediate I) to form undecaprenyl-pyrophosphoryl-MurNAc-(pentapeptide)GlcNAc (lipid intermediate II). In Listeria welshimeri serovar 6b (strain ATCC 35897 / DSM 20650 / CCUG 15529 / CIP 8149 / NCTC 11857 / SLCC 5334 / V8), this protein is UDP-N-acetylglucosamine--N-acetylmuramyl-(pentapeptide) pyrophosphoryl-undecaprenol N-acetylglucosamine transferase.